Consider the following 460-residue polypeptide: ATP synthase subunit beta (460 aa).

Position 150–157 (Gly-150–Thr-157) interacts with ATP.

This sequence belongs to the ATPase alpha/beta chains family. In terms of assembly, F-type ATPases have 2 components, CF(1) - the catalytic core - and CF(0) - the membrane proton channel. CF(1) has five subunits: alpha(3), beta(3), gamma(1), delta(1), epsilon(1). CF(0) has three main subunits: a(1), b(2) and c(9-12). The alpha and beta chains form an alternating ring which encloses part of the gamma chain. CF(1) is attached to CF(0) by a central stalk formed by the gamma and epsilon chains, while a peripheral stalk is formed by the delta and b chains.

It is found in the cell inner membrane. The catalysed reaction is ATP + H2O + 4 H(+)(in) = ADP + phosphate + 5 H(+)(out). Its function is as follows. Produces ATP from ADP in the presence of a proton gradient across the membrane. The catalytic sites are hosted primarily by the beta subunits. In Yersinia enterocolitica serotype O:8 / biotype 1B (strain NCTC 13174 / 8081), this protein is ATP synthase subunit beta.